Here is a 149-residue protein sequence, read N- to C-terminus: Putative sugar phosphate isomerase YwlF (149 aa).

H9 is a substrate binding site. Catalysis depends on C66, which acts as the Proton acceptor. Residue 67–72 (GTGIGM) coordinates substrate. H99 serves as the catalytic Proton donor. R133 is a substrate binding site.

The protein belongs to the LacAB/RpiB family.

This is Putative sugar phosphate isomerase YwlF (ywlF) from Bacillus subtilis (strain 168).